Here is a 723-residue protein sequence, read N- to C-terminus: Catalase-peroxidase (723 aa).

Positions 98–226 (WHAAGSYRAA…LAAVQMGLIY (129 aa)) form a cross-link, tryptophyl-tyrosyl-methioninium (Trp-Tyr) (with M-252). His99 acts as the Proton acceptor in catalysis. Residues 226-252 (YVNPEGVNGKPDPLKTAAQVRETFARM) constitute a cross-link (tryptophyl-tyrosyl-methioninium (Tyr-Met) (with W-98)). A heme b-binding site is contributed by His267. Residues 267–286 (HTVGKTHGNGRAENLGPSPE) are disordered.

Belongs to the peroxidase family. Peroxidase/catalase subfamily. In terms of assembly, homodimer or homotetramer. The cofactor is heme b. In terms of processing, formation of the three residue Trp-Tyr-Met cross-link is important for the catalase, but not the peroxidase activity of the enzyme.

The catalysed reaction is H2O2 + AH2 = A + 2 H2O. It carries out the reaction 2 H2O2 = O2 + 2 H2O. Its function is as follows. Bifunctional enzyme with both catalase and broad-spectrum peroxidase activity. In Thioalkalivibrio sulfidiphilus (strain HL-EbGR7), this protein is Catalase-peroxidase.